A 92-amino-acid chain; its full sequence is Putative transmembrane protein ORF92 (92 aa).

Transmembrane regions (helical) follow at residues 11–28, 32–52, and 54–74; these read FVKG…TYAI, FFSS…LFAS, and FLFD…IGVG.

It localises to the host membrane. The protein is Putative transmembrane protein ORF92 of Acidianus convivator (ABV).